The chain runs to 228 residues: L-ribulose-5-phosphate 4-epimerase UlaF (228 aa).

Substrate-binding positions include 26 to 27 (GN), 43 to 44 (SG), and 72 to 73 (SS). Zn(2+)-binding residues include aspartate 74, histidine 93, and histidine 95. The Proton donor/acceptor role is filled by aspartate 118. Residue histidine 167 participates in Zn(2+) binding. Tyrosine 225 serves as the catalytic Proton donor/acceptor.

It belongs to the aldolase class II family. AraD/FucA subfamily. Zn(2+) serves as cofactor.

It catalyses the reaction L-ribulose 5-phosphate = D-xylulose 5-phosphate. The protein operates within cofactor degradation; L-ascorbate degradation; D-xylulose 5-phosphate from L-ascorbate: step 4/4. Catalyzes the isomerization of L-ribulose 5-phosphate to D-xylulose 5-phosphate. Is involved in the anaerobic L-ascorbate utilization. The protein is L-ribulose-5-phosphate 4-epimerase UlaF of Shigella sonnei (strain Ss046).